Consider the following 232-residue polypeptide: 2-C-methyl-D-erythritol 4-phosphate cytidylyltransferase (232 aa).

It belongs to the IspD/TarI cytidylyltransferase family. IspD subfamily.

The catalysed reaction is 2-C-methyl-D-erythritol 4-phosphate + CTP + H(+) = 4-CDP-2-C-methyl-D-erythritol + diphosphate. The protein operates within isoprenoid biosynthesis; isopentenyl diphosphate biosynthesis via DXP pathway; isopentenyl diphosphate from 1-deoxy-D-xylulose 5-phosphate: step 2/6. Catalyzes the formation of 4-diphosphocytidyl-2-C-methyl-D-erythritol from CTP and 2-C-methyl-D-erythritol 4-phosphate (MEP). The polypeptide is 2-C-methyl-D-erythritol 4-phosphate cytidylyltransferase (Shewanella frigidimarina (strain NCIMB 400)).